Here is a 437-residue protein sequence, read N- to C-terminus: Enolase (437 aa).

Q162 serves as a coordination point for (2R)-2-phosphoglycerate. The Proton donor role is filled by E204. Mg(2+) contacts are provided by D251, E297, and D324. (2R)-2-phosphoglycerate contacts are provided by K349, R378, S379, and K400. K349 acts as the Proton acceptor in catalysis.

This sequence belongs to the enolase family. Mg(2+) is required as a cofactor.

It is found in the cytoplasm. The protein resides in the secreted. Its subcellular location is the cell surface. The enzyme catalyses (2R)-2-phosphoglycerate = phosphoenolpyruvate + H2O. It participates in carbohydrate degradation; glycolysis; pyruvate from D-glyceraldehyde 3-phosphate: step 4/5. Its function is as follows. Catalyzes the reversible conversion of 2-phosphoglycerate (2-PG) into phosphoenolpyruvate (PEP). It is essential for the degradation of carbohydrates via glycolysis. The chain is Enolase from Chlorobium luteolum (strain DSM 273 / BCRC 81028 / 2530) (Pelodictyon luteolum).